A 356-amino-acid polypeptide reads, in one-letter code: S-adenosylmethionine:tRNA ribosyltransferase-isomerase (356 aa).

The protein belongs to the QueA family. As to quaternary structure, monomer.

It is found in the cytoplasm. It catalyses the reaction 7-aminomethyl-7-carbaguanosine(34) in tRNA + S-adenosyl-L-methionine = epoxyqueuosine(34) in tRNA + adenine + L-methionine + 2 H(+). The protein operates within tRNA modification; tRNA-queuosine biosynthesis. Functionally, transfers and isomerizes the ribose moiety from AdoMet to the 7-aminomethyl group of 7-deazaguanine (preQ1-tRNA) to give epoxyqueuosine (oQ-tRNA). The sequence is that of S-adenosylmethionine:tRNA ribosyltransferase-isomerase from Xanthomonas campestris pv. campestris (strain B100).